Reading from the N-terminus, the 215-residue chain is Methylthioribulose-1-phosphate dehydratase (215 aa).

Positions 103 and 105 each coordinate Zn(2+).

Belongs to the aldolase class II family. MtnB subfamily. Zn(2+) serves as cofactor.

The enzyme catalyses 5-(methylsulfanyl)-D-ribulose 1-phosphate = 5-methylsulfanyl-2,3-dioxopentyl phosphate + H2O. Its pathway is amino-acid biosynthesis; L-methionine biosynthesis via salvage pathway; L-methionine from S-methyl-5-thio-alpha-D-ribose 1-phosphate: step 2/6. Its function is as follows. Catalyzes the dehydration of methylthioribulose-1-phosphate (MTRu-1-P) into 2,3-diketo-5-methylthiopentyl-1-phosphate (DK-MTP-1-P). This chain is Methylthioribulose-1-phosphate dehydratase, found in Sulfurihydrogenibium sp. (strain YO3AOP1).